Here is a 558-residue protein sequence, read N- to C-terminus: MAKHVVFDEESRRALERGVNSLADAVRITLGPKGRNVVLEKKFGAPQIINDGVTIAKEVELEDPLENAGAQLMREVASKTNDVAGDGTTTATVLAQALIREGLKNVAAGANPVALRKGIDKTIDALVKEIEAKSKPVAGDAIAQVATISAGNDTEVGQMIAQAMDKVGKDGVITVEESKSLATEMEIVEGMQIDRGYISPYFVTDAERMVAEIENARLLIVNKKISSLQDLVGILEQVARAGQPLLIIAEDLEGEALATLVVNKLRGVLNVVAIKAPGFGERRQAMLQDIAVLTGGQVISEDVGLTLDKVDLEMLGTARKVTISKDNTTIVSEAANAGDVGKRVEQLRRQLDETDSEYDKEKLQERIAKLAGGVAVIKVGAATETELKDRKLRIEDALNATKAAVAEGIVPGGGTTLIHLTKTIESVKAQLKDEEKVGADLVGIALEAPLTQIADNAGKEGAVVVEKVRDADFSYGYNAMTDTYEDMIAAGVVDPAKVVRSGLQNAGSIAGMVLTTEALVVDKPEPAGAAAPDMGGMGGMGGMGGMGGMGGMGGMGMM.

Residues 29–32 (TLGP), 86–90 (DGTTT), glycine 413, and aspartate 494 contribute to the ATP site.

This sequence belongs to the chaperonin (HSP60) family. In terms of assembly, forms a cylinder of 14 subunits composed of two heptameric rings stacked back-to-back. Interacts with the co-chaperonin GroES.

It localises to the cytoplasm. It carries out the reaction ATP + H2O + a folded polypeptide = ADP + phosphate + an unfolded polypeptide.. Its function is as follows. Together with its co-chaperonin GroES, plays an essential role in assisting protein folding. The GroEL-GroES system forms a nano-cage that allows encapsulation of the non-native substrate proteins and provides a physical environment optimized to promote and accelerate protein folding. The polypeptide is Chaperonin GroEL 1 (Acaryochloris marina (strain MBIC 11017)).